The primary structure comprises 251 residues: Coproheme decarboxylase (251 aa).

Fe-coproporphyrin III-binding positions include arginine 133, 147–151 (YPMSK), histidine 174, glutamine 187, and serine 225. Residue tyrosine 147 is part of the active site.

It belongs to the ChdC family. Type 1 subfamily. Fe-coproporphyrin III is required as a cofactor.

It catalyses the reaction Fe-coproporphyrin III + 2 H2O2 + 2 H(+) = heme b + 2 CO2 + 4 H2O. The catalysed reaction is Fe-coproporphyrin III + H2O2 + H(+) = harderoheme III + CO2 + 2 H2O. It carries out the reaction harderoheme III + H2O2 + H(+) = heme b + CO2 + 2 H2O. It functions in the pathway porphyrin-containing compound metabolism; protoheme biosynthesis. Its function is as follows. Involved in coproporphyrin-dependent heme b biosynthesis. Catalyzes the decarboxylation of Fe-coproporphyrin III (coproheme) to heme b (protoheme IX), the last step of the pathway. The reaction occurs in a stepwise manner with a three-propionate intermediate. In Listeria welshimeri serovar 6b (strain ATCC 35897 / DSM 20650 / CCUG 15529 / CIP 8149 / NCTC 11857 / SLCC 5334 / V8), this protein is Coproheme decarboxylase.